Reading from the N-terminus, the 354-residue chain is UPF0283 membrane protein HI_0043 (354 aa).

3 consecutive transmembrane segments (helical) span residues 57 to 77 (LLKF…VQWI), 87 to 107 (IYLA…KEII), and 211 to 231 (ESAV…FIAW).

Belongs to the UPF0283 family.

It localises to the cell inner membrane. The protein is UPF0283 membrane protein HI_0043 of Haemophilus influenzae (strain ATCC 51907 / DSM 11121 / KW20 / Rd).